The sequence spans 292 residues: ATP synthase gamma chain (292 aa).

This sequence belongs to the ATPase gamma chain family. F-type ATPases have 2 components, CF(1) - the catalytic core - and CF(0) - the membrane proton channel. CF(1) has five subunits: alpha(3), beta(3), gamma(1), delta(1), epsilon(1). CF(0) has three main subunits: a, b and c.

It localises to the cell membrane. Produces ATP from ADP in the presence of a proton gradient across the membrane. The gamma chain is believed to be important in regulating ATPase activity and the flow of protons through the CF(0) complex. The chain is ATP synthase gamma chain from Streptococcus thermophilus (strain CNRZ 1066).